Consider the following 130-residue polypeptide: Immunoglobulin kappa chain variable 9-120 (130 aa).

The first 22 residues, 1–22 (MDMRAPAQIFGFLLLLFQGTRC), serve as a signal peptide directing secretion. The interval 23–45 (DIQMTQSPSSLSASLGERVSLTC) is framework-1. A disulfide bridge connects residues C45 and C110. Positions 46–56 (RASQDIGSSLN) are complementarity-determining-1. Residues 57–71 (WLQQEPDGTIKRLIY) are framework-2. The complementarity-determining-2 stretch occupies residues 72-78 (ATSSLDS). The tract at residues 79 to 110 (GVPKRFSGSRSGSDYSLTISSLESEDFVDYYC) is framework-3. The complementarity-determining-3 stretch occupies residues 111–119 (LQYASSPWT). The segment at 120 to 129 (FGGGTKLEIK) is framework-4.

This is Immunoglobulin kappa chain variable 9-120 from Mus musculus (Mouse).